Here is an 85-residue protein sequence, read N- to C-terminus: U4-theraphotoxin-Hhn1j (85 aa).

Positions Met-1 to Ala-22 are cleaved as a signal peptide. Positions Glu-23–Arg-48 are excised as a propeptide. Cystine bridges form between Cys-52/Cys-66, Cys-56/Cys-77, and Cys-71/Cys-82.

Belongs to the neurotoxin 12 (Hwtx-2) family. 02 (Hwtx-2) subfamily. In terms of tissue distribution, expressed by the venom gland.

It is found in the secreted. Its function is as follows. Postsynaptic neurotoxin. The sequence is that of U4-theraphotoxin-Hhn1j from Cyriopagopus hainanus (Chinese bird spider).